The primary structure comprises 94 residues: Large ribosomal subunit protein bL27 (94 aa).

A propeptide spanning residues 1-9 (MLRLDLQFF) is cleaved from the precursor.

It belongs to the bacterial ribosomal protein bL27 family. As to quaternary structure, part of the 50S ribosomal subunit. The N-terminus is cleaved by ribosomal processing cysteine protease Prp.

Plays a role in sporulation at high temperatures. In Bacillus subtilis (strain 168), this protein is Large ribosomal subunit protein bL27 (rpmA).